Here is a 423-residue protein sequence, read N- to C-terminus: UDP-N-acetylmuramoylalanine--D-glutamate ligase (423 aa).

Position 112-118 (112-118) interacts with ATP; the sequence is GSVGKST.

This sequence belongs to the MurCDEF family.

The protein resides in the cytoplasm. The catalysed reaction is UDP-N-acetyl-alpha-D-muramoyl-L-alanine + D-glutamate + ATP = UDP-N-acetyl-alpha-D-muramoyl-L-alanyl-D-glutamate + ADP + phosphate + H(+). The protein operates within cell wall biogenesis; peptidoglycan biosynthesis. Functionally, cell wall formation. Catalyzes the addition of glutamate to the nucleotide precursor UDP-N-acetylmuramoyl-L-alanine (UMA). The sequence is that of UDP-N-acetylmuramoylalanine--D-glutamate ligase from Thermosipho africanus (strain TCF52B).